Reading from the N-terminus, the 475-residue chain is MTTILTSTFRNLSTTSKWALRFSVRPLSCSSQVQSAPAVQTKSKKTLAKPNLKNIVVVEGVRIPFLLSGTSYKDLMPHDLARAALSGLLYRTNIPKDVVDYIIFGTVIQEVKTSNVAREAALGAGFSDKTPAHTVTMACISSNQAMTTAVGLIASGQCDVVVAGGVELMSDVPIRHSRNMRKMMLDLNKAKTLAQRLSLLTKFRLNFLSPELPAVAEFSTNETMGHSADRLAAAFAVSRMEQDKYALRSHSLAKKAQDEGHLSDIVPFKVPGKDTVSKDNGIRPSSLEQMAKLKPAFIKPYGTVTAANSSFLTDGASAMLIMSEDRALAMGYKPKAYLRDFIYVSQDPKDQLLLGPTYATPKVLEKAGLTMNDIDAFEFHEAFSGQILANFKAMDSDWFAQNYMGRKTKVGAPPLEKFNIWGGSLSLGHPFGATGCRLVMAAANRLRKDGGQYALVAACAAGGQGHAMIVEAYPK.

The N-terminal 34 residues, 1 to 34 (MTTILTSTFRNLSTTSKWALRFSVRPLSCSSQVQ), are a transit peptide targeting the mitochondrion. At lysine 53 the chain carries N6-succinyllysine. Lysine 73 carries the post-translational modification N6-acetyllysine; alternate. Lysine 73 carries the post-translational modification N6-succinyllysine; alternate. The active-site Acyl-thioester intermediate is cysteine 139. Residues 174-221 (IRHSRNMRKMMLDLNKAKTLAQRLSLLTKFRLNFLSPELPAVAEFSTN) lie within the membrane without spanning it. At lysine 189 the chain carries N6-acetyllysine; alternate. Residue lysine 189 is modified to N6-succinyllysine; alternate. N6-succinyllysine is present on residues lysine 191, lysine 273, and lysine 292. Residue lysine 294 is modified to N6-acetyllysine; alternate. Position 294 is an N6-succinyllysine; alternate (lysine 294). Lysine 299 carries the N6-acetyllysine modification. Lysine 333 is subject to N6-acetyllysine; alternate. Position 333 is an N6-succinyllysine; alternate (lysine 333). An N6-acetyllysine mark is found at lysine 349 and lysine 362. Cysteine 459 (proton donor/acceptor) is an active-site residue.

It belongs to the thiolase-like superfamily. Thiolase family. In terms of assembly, heterotetramer of 2 alpha/HADHA and 2 beta/HADHB subunits; forms the mitochondrial trifunctional enzyme. Also purified as higher order heterooligomers including a 4 alpha/HADHA and 4 beta/HADHB heterooligomer which physiological significance remains unclear. The mitochondrial trifunctional enzyme interacts with MTLN. Interacts with RSAD2/viperin.

The protein resides in the mitochondrion. It is found in the mitochondrion inner membrane. Its subcellular location is the mitochondrion outer membrane. It localises to the endoplasmic reticulum. The enzyme catalyses an acyl-CoA + acetyl-CoA = a 3-oxoacyl-CoA + CoA. It catalyses the reaction butanoyl-CoA + acetyl-CoA = 3-oxohexanoyl-CoA + CoA. The catalysed reaction is hexanoyl-CoA + acetyl-CoA = 3-oxooctanoyl-CoA + CoA. It carries out the reaction octanoyl-CoA + acetyl-CoA = 3-oxodecanoyl-CoA + CoA. The enzyme catalyses decanoyl-CoA + acetyl-CoA = 3-oxododecanoyl-CoA + CoA. It catalyses the reaction dodecanoyl-CoA + acetyl-CoA = 3-oxotetradecanoyl-CoA + CoA. The catalysed reaction is tetradecanoyl-CoA + acetyl-CoA = 3-oxohexadecanoyl-CoA + CoA. Its pathway is lipid metabolism; fatty acid beta-oxidation. Mitochondrial trifunctional enzyme catalyzes the last three of the four reactions of the mitochondrial beta-oxidation pathway. The mitochondrial beta-oxidation pathway is the major energy-producing process in tissues and is performed through four consecutive reactions breaking down fatty acids into acetyl-CoA. Among the enzymes involved in this pathway, the trifunctional enzyme exhibits specificity for long-chain fatty acids. Mitochondrial trifunctional enzyme is a heterotetrameric complex composed of two proteins, the trifunctional enzyme subunit alpha/HADHA carries the 2,3-enoyl-CoA hydratase and the 3-hydroxyacyl-CoA dehydrogenase activities, while the trifunctional enzyme subunit beta/HADHB described here bears the 3-ketoacyl-CoA thiolase activity. The polypeptide is Trifunctional enzyme subunit beta, mitochondrial (Hadhb) (Rattus norvegicus (Rat)).